The chain runs to 142 residues: Large ribosomal subunit protein bL19 (142 aa).

Belongs to the bacterial ribosomal protein bL19 family.

Its function is as follows. This protein is located at the 30S-50S ribosomal subunit interface and may play a role in the structure and function of the aminoacyl-tRNA binding site. The chain is Large ribosomal subunit protein bL19 from Psychrobacter cryohalolentis (strain ATCC BAA-1226 / DSM 17306 / VKM B-2378 / K5).